The following is a 311-amino-acid chain: ATP synthase gamma chain (311 aa).

Residues Cys-67 and Cys-138 are joined by a disulfide bond.

The protein belongs to the ATPase gamma chain family. In terms of assembly, F-type ATPases have 2 components, CF(1) - the catalytic core - and CF(0) - the membrane proton channel. CF(1) has five subunits: alpha(3), beta(3), gamma(1), delta(1), epsilon(1). CF(0) has three main subunits: a, b and c.

The protein localises to the cellular thylakoid membrane. With respect to regulation, thiol-modulation by raising the activation threshold of the enzyme upon oxidation of the cysteines, thereby preventing wasteful ATP-hydrolysis. In terms of biological role, produces ATP from ADP in the presence of a proton gradient across the membrane. The gamma chain is believed to be important in regulating ATPase activity and the flow of protons through the CF(0) complex. This Arthrospira platensis (Spirulina platensis) protein is ATP synthase gamma chain (atpG).